The following is a 501-amino-acid chain: Sucrose transport protein SUT2 (501 aa).

At 1–31 (MPRRPSGGGGGAGPAAAAVRKVPLRKLLRAA) the chain is on the cytoplasmic side. Residues 32 to 52 (SVACGVQFGWALQLSLLTPYV) form a helical membrane-spanning segment. Residues 53–55 (QEL) are Extracellular-facing. A helical membrane pass occupies residues 56–76 (GIPHAFASLVWLCGPLSGLLV). Residues 77 to 98 (QPLVGHLSDRIAPAASPLGRRR) are Cytoplasmic-facing. Residues 99-119 (PFIAAGAASIAAAVLTVGFSA) traverse the membrane as a helical segment. Topologically, residues 120–135 (DLGRIFGDSITPGSTR) are extracellular. A helical transmembrane segment spans residues 136–156 (LGAIIVYLVGFWLLDVGNNAT). The Cytoplasmic portion of the chain corresponds to 157-176 (QGPCRAFLADLTENDPRRTR). Residues 177-197 (IANAYFSLFMALGNILGYATG) form a helical membrane-spanning segment. Residues 198–222 (AYSGWYKIFPFTVTPSCSISCANLK) lie on the Extracellular side of the membrane. Residues 223–243 (SAFLLDIIILVVTTCITVASV) traverse the membrane as a helical segment. Residues 244 to 278 (QEPQSFGSDEADHPSTEQEAFLWELFGSFRYFTLP) lie on the Cytoplasmic side of the membrane. Residues 279 to 299 (VWMVLIVTALTWIGWFPFILF) traverse the membrane as a helical segment. Residues 300–327 (DTDWMGREIYRGSPDDPSITQSYHDGVR) lie on the Extracellular side of the membrane. The chain crosses the membrane as a helical span at residues 328 to 348 (MGSFGLMLNSVLLGFTSIVLE). The Cytoplasmic portion of the chain corresponds to 349–356 (KLCRKWGA). A helical transmembrane segment spans residues 357–377 (GLVWGVSNILMALCFVAMLVI). At 378-394 (TYVAKNMDYPPSGVPPT) the chain is on the extracellular side. The chain crosses the membrane as a helical span at residues 395–415 (GIVIASLVVFTILGAPLAITY). The Cytoplasmic segment spans residues 416–433 (SIPYAMAASRVENLGLGQ). The helical transmembrane segment at 434–454 (GLAMGILNLAIVIPQVIVSLG) threads the bilayer. Residues 455–467 (SGPWDQLFGGGNA) lie on the Extracellular side of the membrane. The helical transmembrane segment at 468–488 (PAFAVAAAASFIGGLVAILGL) threads the bilayer. Residues 489–501 (PRARIASRRRGHR) are Cytoplasmic-facing.

This sequence belongs to the glycoside-pentoside-hexuronide (GPH) cation symporter transporter (TC 2.A.2.4) family. Homodimer. As to expression, widely expressed.

The protein localises to the cell membrane. It functions in the pathway glycan biosynthesis; sucrose metabolism. Functionally, responsible for the transport of sucrose into the cell, with the concomitant uptake of protons (symport system). May also transport other glucosides. This is Sucrose transport protein SUT2 (SUT2) from Oryza sativa subsp. japonica (Rice).